We begin with the raw amino-acid sequence, 211 residues long: Interleukin-6 (211 aa).

The N-terminal stretch at methionine 1 to alanine 24 is a signal peptide. The cysteines at positions 70 and 76 are disulfide-linked. At serine 79 the chain carries Phosphoserine. The cysteines at positions 99 and 109 are disulfide-linked.

The protein belongs to the IL-6 superfamily. Component of a hexamer of two molecules each of IL6, IL6R and IL6ST; first binds to IL6R to associate with the signaling subunit IL6ST. Interacts with IL6R (via the N-terminal ectodomain); this interaction may be affected by IL6R-binding with SORL1, hence decreasing IL6 cis signaling. Interacts with SORL1 (via the N-terminal ectodomain); this interaction leads to IL6 internalization and lysosomal degradation. May form a trimeric complex with the soluble SORL1 ectodomain and soluble IL6R receptor; this interaction might stabilize circulating IL6, hence promoting IL6 trans signaling.

Its subcellular location is the secreted. Its function is as follows. Cytokine with a wide variety of biological functions in immunity, tissue regeneration, and metabolism. Binds to IL6R, then the complex associates to the signaling subunit IL6ST/gp130 to trigger the intracellular IL6-signaling pathway. The interaction with the membrane-bound IL6R and IL6ST stimulates 'classic signaling', whereas the binding of IL6 and soluble IL6R to IL6ST stimulates 'trans-signaling'. Alternatively, 'cluster signaling' occurs when membrane-bound IL6:IL6R complexes on transmitter cells activate IL6ST receptors on neighboring receiver cells. IL6 is a potent inducer of the acute phase response. Rapid production of IL6 contributes to host defense during infection and tissue injury, but excessive IL6 synthesis is involved in disease pathology. In the innate immune response, is synthesized by myeloid cells, such as macrophages and dendritic cells, upon recognition of pathogens through toll-like receptors (TLRs) at the site of infection or tissue injury. In the adaptive immune response, is required for the differentiation of B-cells into immunoglolin-secreting cells. Plays a major role in the differentiation of CD4(+) T cell subsets. Essential factor for the development of T follicular helper (Tfh) cells that are required for the induction of germinal-center formation. Together with IL21, controls the early generation of Tfh cells and are critical for an effective antibody response to acute viral infection. Required to drive naive CD4(+) T cells to the Th17 lineage, through 'cluster signaling' by dendritic cells. Also required for proliferation of myeloma cells and the survival of plasmablast cells. In terms of biological role, acts as an essential factor in bone homeostasis and on vessels directly or indirectly by induction of VEGF, resulting in increased angiogenesis activity and vascular permeability. Induces, through 'trans-signaling' and synergistically with IL1B and TNF, the production of VEGF. Involved in metabolic controls, is discharged into the bloodstream after muscle contraction increasing lipolysis and improving insulin resistance. 'Trans-signaling' in central nervous system regulates energy and glucose homeostasis. Mediates, through GLP-1, crosstalk between insulin-sensitive tissues, intestinal L cells and pancreatic islets to adapt to changes in insulin demand. Also acts as a myokine. Plays a protective role during liver injury, being required for maintenance of tissue regeneration. Also has a pivotal role in iron metabolism by regulating HAMP/hepcidin expression upon inflammation or bacterial infection. Through activation of IL6ST-YAP-NOTCH pathway, induces inflammation-induced epithelial regeneration. The sequence is that of Interleukin-6 from Rattus norvegicus (Rat).